Reading from the N-terminus, the 377-residue chain is Putative glutamate--cysteine ligase 2 (377 aa).

The protein belongs to the glutamate--cysteine ligase type 2 family. YbdK subfamily.

The catalysed reaction is L-cysteine + L-glutamate + ATP = gamma-L-glutamyl-L-cysteine + ADP + phosphate + H(+). Its function is as follows. ATP-dependent carboxylate-amine ligase which exhibits weak glutamate--cysteine ligase activity. This Chromobacterium violaceum (strain ATCC 12472 / DSM 30191 / JCM 1249 / CCUG 213 / NBRC 12614 / NCIMB 9131 / NCTC 9757 / MK) protein is Putative glutamate--cysteine ligase 2.